Consider the following 343-residue polypeptide: RNA-binding protein 43 (343 aa).

One can recognise an RRM domain in the interval 15-90; it reads RTVVVSGLPV…PLLTVSHFSE (76 aa). The tract at residues 170–200 is disordered; sequence RRNWTGQNPRRVLQKNENSAPTLGTSVPEPA. The segment covering 184–194 has biased composition (polar residues); that stretch reads KNENSAPTLGT.

In Rattus norvegicus (Rat), this protein is RNA-binding protein 43 (Rbm43).